Here is a 140-residue protein sequence, read N- to C-terminus: uncharacterized protein (140 aa).

An N-linked (GlcNAc...) asparagine glycan is attached at Asn27. 3 helical membrane passes run 45–65 (FSLYWTLIFNGAFYVTAGVYA), 76–96 (VWIFVMYVLYGGVQGLTTGTV), and 116–136 (VPLCCAVVQILFDVVLSYSMV).

It belongs to the TMEM170 family.

Its subcellular location is the membrane. This is an uncharacterized protein from Saccharomyces cerevisiae (strain ATCC 204508 / S288c) (Baker's yeast).